Consider the following 317-residue polypeptide: Inactive serine protease 45 (317 aa).

An N-terminal signal peptide occupies residues 1–35 (MATSLRGLDAGPGSLRRWILICFAALLLLPPRPNL). N40 carries N-linked (GlcNAc...) asparagine glycosylation. Residues 44 to 291 (PVCGTPWWPD…YTIWIKDQVS (248 aa)) enclose the Peptidase S1 domain. An intrachain disulfide couples C75 to C91. The N-linked (GlcNAc...) asparagine glycan is linked to N110. 3 disulfide bridges follow: C172–C249, C207–C230, and C239–C267. N-linked (GlcNAc...) asparagine glycosylation occurs at N272.

It belongs to the peptidase S1 family.

The protein localises to the secreted. The chain is Inactive serine protease 45 from Mus musculus (Mouse).